The following is an 816-amino-acid chain: Leucine--tRNA ligase (816 aa).

The 'HIGH' region signature appears at 46–56 (PYPSGALHMGH). Residues 638-642 (KMSKS) carry the 'KMSKS' region motif. Lys-641 provides a ligand contact to ATP.

This sequence belongs to the class-I aminoacyl-tRNA synthetase family.

The protein localises to the cytoplasm. It carries out the reaction tRNA(Leu) + L-leucine + ATP = L-leucyl-tRNA(Leu) + AMP + diphosphate. This chain is Leucine--tRNA ligase, found in Xanthomonas campestris pv. campestris (strain ATCC 33913 / DSM 3586 / NCPPB 528 / LMG 568 / P 25).